A 394-amino-acid polypeptide reads, in one-letter code: Elongation factor Tu 2 (394 aa).

The 195-residue stretch at 10-204 (KPHVNVGTIG…ALDNYIPEPE (195 aa)) folds into the tr-type G domain. Residues 19–26 (GHVDHGKT) form a G1 region. GTP is bound at residue 19-26 (GHVDHGKT). Thr26 serves as a coordination point for Mg(2+). The segment at 60 to 64 (GITIS) is G2. Residues 81 to 84 (DCPG) are G3. GTP is bound by residues 81–85 (DCPGH) and 136–139 (NKCD). The interval 136–139 (NKCD) is G4. The interval 174 to 176 (SAL) is G5.

It belongs to the TRAFAC class translation factor GTPase superfamily. Classic translation factor GTPase family. EF-Tu/EF-1A subfamily. Monomer.

It is found in the cytoplasm. It catalyses the reaction GTP + H2O = GDP + phosphate + H(+). Functionally, GTP hydrolase that promotes the GTP-dependent binding of aminoacyl-tRNA to the A-site of ribosomes during protein biosynthesis. This Photobacterium profundum (strain SS9) protein is Elongation factor Tu 2.